Reading from the N-terminus, the 320-residue chain is Protein LATERAL ROOT PRIMORDIUM 1 (320 aa).

The segment at 90 to 110 is disordered; that stretch reads QTTVGTSSNNSGSGSGASGTA. Zn(2+)-binding residues include C112, C115, C123, C128, C132, and C139. A DNA-binding region (zn(2)-C6 fungal-type; degenerate) is located at residues 112–139; sequence CQDCGNQAKKECKQRRCRTCCKSRGFDC. Residues 150–223 form a disordered region; that stretch reads AARRRERQVM…QDGGGSREAW (74 aa). Positions 168–177 are enriched in low complexity; it reads GSSLSTSSGT. Over residues 193 to 214 the composition is skewed to polar residues; the sequence is ATSHTSTSNTPPQSFETSSSRQ. The Required for homo- and heterodimerization motif lies at 256–259; the sequence is IGGH.

The protein belongs to the SHI protein family. As to quaternary structure, homodimer. As to expression, restricted to lateral root primordia.

It is found in the nucleus. Its function is as follows. Transcription activator that binds DNA on 5'-ACTCTAC-3' and promotes auxin homeostasis-regulating gene expression (e.g. YUC genes), as well as genes affecting stamen development, cell expansion and timing of flowering. Synergistically with other SHI-related proteins, regulates gynoecium, stamen and leaf development in a dose-dependent manner, controlling apical-basal patterning. Promotes style and stigma formation, and influence vascular development during gynoecium development. May also have a role in the formation and/or maintenance of the shoot apical meristem (SAM). Modulates root growth. This chain is Protein LATERAL ROOT PRIMORDIUM 1 (LRP1), found in Arabidopsis thaliana (Mouse-ear cress).